Consider the following 290-residue polypeptide: Xyloglucan endotransglucosylase/hydrolase protein 3 (290 aa).

An N-terminal signal peptide occupies residues 1 to 21 (MDYMRIFSVFVVTLWIIRVDA). The region spanning 22 to 220 (RVFGGRGIEK…WSYSPFIAHF (199 aa)) is the GH16 domain. The active-site Nucleophile is E109. The active-site Proton donor is E113. Residues E113, 126–128 (QTN), 136–138 (NRE), 199–200 (DW), and G204 each bind xyloglucan. N210 is a glycosylation site (N-linked (GlcNAc...) asparagine). 2 disulfide bridges follow: C228–C240 and C276–C289.

This sequence belongs to the glycosyl hydrolase 16 family. XTH group 1 subfamily. Contains at least one intrachain disulfide bond essential for its enzymatic activity. In terms of tissue distribution, predominantly expressed in flower buds.

The protein localises to the secreted. It is found in the cell wall. It localises to the extracellular space. Its subcellular location is the apoplast. The catalysed reaction is breaks a beta-(1-&gt;4) bond in the backbone of a xyloglucan and transfers the xyloglucanyl segment on to O-4 of the non-reducing terminal glucose residue of an acceptor, which can be a xyloglucan or an oligosaccharide of xyloglucan.. Catalyzes xyloglucan endohydrolysis (XEH) and/or endotransglycosylation (XET). Cleaves and religates xyloglucan polymers, an essential constituent of the primary cell wall, and thereby participates in cell wall construction of growing tissues. This Arabidopsis thaliana (Mouse-ear cress) protein is Xyloglucan endotransglucosylase/hydrolase protein 3 (XTH3).